Consider the following 606-residue polypeptide: ATP-dependent rRNA helicase SPB4 (606 aa).

The short motif at 7 to 35 is the Q motif element; it reads WDNLGFSLLPWIRTGLDVMGFETMTPVQA. One can recognise a Helicase ATP-binding domain in the interval 38–224; that stretch reads IPMLAGNKDV…KTGLRNPVRI (187 aa). 51-58 contributes to the ATP binding site; sequence SVTGSGKT. The short motif at 172 to 175 is the DEAD box element; the sequence is DEAD. Positions 248 to 404 constitute a Helicase C-terminal domain; sequence KLQLLVSILN…ELDLEVKGIT (157 aa). Residue serine 254 is modified to Phosphoserine. The stretch at 539–582 forms a coiled coil; that stretch reads KTLTKERKLERKEKMSLKRKAIEEELKAEELDENAEEERIKEDW.

This sequence belongs to the DEAD box helicase family. DDX55/SPB4 subfamily. In terms of assembly, component of pre-60S ribosomal complexes.

It is found in the nucleus. The protein localises to the nucleolus. The enzyme catalyses ATP + H2O = ADP + phosphate + H(+). In terms of biological role, ATP-binding RNA helicase involved in the biogenesis of 60S ribosomal subunits. Binds 90S pre-ribosomal particles and dissociates from pre-60S ribosomal particles after processing of 27SB pre-rRNA. Required for the normal formation of 18S rRNA through the processing of pre-rRNAs at sites A0, A1 and A2, and the normal formation of 25S and 5.8S rRNAs through the processing of pre-rRNAs at sites C1 and C2. Also required for recruitment of NOG2 to pre-ribosomes. The sequence is that of ATP-dependent rRNA helicase SPB4 from Saccharomyces cerevisiae (strain ATCC 204508 / S288c) (Baker's yeast).